The primary structure comprises 75 residues: Conotoxin Vc6a (75 aa).

Positions 1-22 (MKLTCVVIVAVLFLTANTFATA) are cleaved as a signal peptide. The propeptide occupies 23–49 (DDPRNGLENLFLKAHHEMNPEASKLNE). 3 cysteine pairs are disulfide-bonded: Cys51/Cys66, Cys58/Cys69, and Cys65/Cys74.

In terms of tissue distribution, expressed by the venom duct.

It is found in the secreted. This Conus victoriae (Queen Victoria cone) protein is Conotoxin Vc6a.